The sequence spans 2737 residues: Non-reducing polyketide synthase ATEG_07661 (2737 aa).

Positions 75–245 (SRSLAELDSW…VRYDQTRATV (171 aa)) are N-terminal acylcarrier protein transacylase domain (SAT). Residue Cys-154 is the Nucleophile; for transacylase activity of the active site. His-276 (proton donor/acceptor; for transacylase activity) is an active-site residue. The Ketosynthase family 3 (KS3) domain occupies 427–854 (NEAIAIVGMS…GSNASMIITE (428 aa)). Active-site for beta-ketoacyl synthase activity residues include Cys-603, His-738, and His-777. A malonyl-CoA:ACP transacylase (MAT) region spans residues 969–1260 (FGGQVSRFVG…IMASRAIAQS (292 aa)). Positions 1368 to 1503 (LQSLWNFVEF…ASVEMRAPTD (136 aa)) are N-terminal hotdog fold. One can recognise a PKS/mFAS DH domain in the interval 1368 to 1683 (LQSLWNFVEF…YGRVAKASMS (316 aa)). Positions 1399-1681 (FVLSHVIAQT…VQYGRVAKAS (283 aa)) are product template (PT) domain. His-1403 (proton acceptor; for dehydratase activity) is an active-site residue. Residues 1535 to 1683 (VEVLQGRNVY…YGRVAKASMS (149 aa)) are C-terminal hotdog fold. Residue Asp-1592 is the Proton donor; for dehydratase activity of the active site. A disordered region spans residues 1724-1747 (SRTTKKKAKASKSKSSVKKDKAPS). Basic residues predominate over residues 1725-1739 (RTTKKKAKASKSKSS). The region spanning 1750-1824 (RDITDEVRNL…KFVACVSNAL (75 aa)) is the Carrier domain. Residue Ser-1784 is modified to O-(pantetheine 4'-phosphoryl)serine. The disordered stretch occupies residues 1827–1876 (PNQGQSSIDEDDEDDEHSEDSSNESSSAASDEDASSGLESPDTGILTPED). Over residues 1834 to 1848 (IDEDDEDDEHSEDSS) the composition is skewed to acidic residues. Over residues 1849–1866 (NESSSAASDEDASSGLES) the composition is skewed to low complexity. The methyltransferase domain stretch occupies residues 2094–2270 (ADRIQSSSGS…GFGHVDWTDG (177 aa)). The NADPH-binding domain stretch occupies residues 2362–2665 (VVLVTGATGS…IPFKDWISRV (304 aa)).

It participates in secondary metabolite biosynthesis. Non-reducing polyketide synthase; part of the cluster B that mediates the biosynthesis of azasperpyranones, members of the azaphilone family that exhibit anti-cancer activities. Azasperpyranones are synthesized by 2 clusters, A and B. Cluster A is responsible for the production of the polyhydric phenol moiety while the azaphilonoid scaffold is produced by the cluster B. The non-reducing polyketide synthase ATEG_03629 produces 5-methyl orsellinic acid, which is then reduced to 5-methyl orsellinic aldehyde by the NRPS-like protein ATEG_03630. 5-methyl orsellinic aldehyde is then first hydroxylated by the FAD-dependent monooxygenase ATEG_03635 and subsequently hydroxylated by the cytochrome P450 monooxygenase ATEG_03631 to produce the unstable polyhydric phenol precursor of azasperpyranones. On the other hand, the polyketide synthase ATEG_07659 is responsible for producing the 3,5-dimethyloctadienone moiety from acetyl-CoA, three malonyl-CoA, and two S-adenosyl methionines (SAM). The 3,5-dimethyloctadienone moiety is then loaded onto the SAT domain of ATEG_07661 and extended with four malonyl-CoA and one SAM, which leads to the formation of 2,4-dihydroxy-6-(5,7-dimethyl-2-oxo-trans-3-trans-5-nonadienyl)-3-methylbenzaldehyde (compound 8) after reductive release and aldol condensation. The FAD-dependent monooxygenase ATEG_07662 is the next enzyme in the biosynthesis sequence and hydroxylates the side chain at the benzylic position of compound 8. In Aspergillus nidulans, afoF, the ortholog of the FAD-dependent oxygenase ATEG_07660, is the key enzyme for the biosynthesis of asperfuranone by catalyzing the hydroxylation at C-8 of to prevent the formation of a six-membered ring hemiacetal intermediate and thus facilitating the formation of a five-membered ring to produce asperfuranone. In Aspergillus terreus, ATEG_07660 is probably not functional, which leads to the formation of the six-membered ring hemiacetal intermediate presperpyranone instead of asperfuranone. Finally, ATEG_03636 is involved in the condensation of the polyhydric phenol moiety produced by cluster A and the perasperpyranone precursor produced by cluster B, to yield azasperpyranone A. Further modifications of azasperpyranone A result in the production of derivatives, including azasperpyranone B to F. The polypeptide is Non-reducing polyketide synthase ATEG_07661 (Aspergillus terreus (strain NIH 2624 / FGSC A1156)).